A 297-amino-acid chain; its full sequence is MAAVQQKHDWADDDELEETSTELPPPQKITNKDGSTTIIEYRLNDNGQKVKTTRRIRYITHREVVNPRVAERKSWTKFGLSVKDGAGPAPDTTSVGENIIFKPSFNWRQEAKDESKDPNAQAMKDKLKDKKVKCRICNGEHFTARCPYKDTMAPIGEAGAAADVAASAADEAAAASQGAAGAGKKGSYVPPALRGAGGAAAAGERMGGKYGERDDLATLRVTNVSEMAEEQELRDMFERFGRVTRVFLAKDRDTGLAKGFAFISFADRSDAVKACAKMDGFGFRHLILRVEFAKKAA.

Positions Met-1–Trp-10 are enriched in basic and acidic residues. Residues Met-1–Ser-35 are disordered. Positions Ala-11–Ser-20 are enriched in acidic residues. Residues Ala-217–Lys-295 enclose the RRM domain.

The protein belongs to the eIF-3 subunit G family. As to quaternary structure, component of the eukaryotic translation initiation factor 3 (eIF-3) complex.

It is found in the cytoplasm. RNA-binding component of the eukaryotic translation initiation factor 3 (eIF-3) complex, which is involved in protein synthesis of a specialized repertoire of mRNAs and, together with other initiation factors, stimulates binding of mRNA and methionyl-tRNAi to the 40S ribosome. The eIF-3 complex specifically targets and initiates translation of a subset of mRNAs involved in cell proliferation. This subunit can bind 18S rRNA. The polypeptide is Eukaryotic translation initiation factor 3 subunit G (eif3g) (Neurospora crassa (strain ATCC 24698 / 74-OR23-1A / CBS 708.71 / DSM 1257 / FGSC 987)).